We begin with the raw amino-acid sequence, 684 residues long: Rabphilin-3A (684 aa).

A disordered region spans residues methionine 1–aspartate 21. The 118-residue stretch at glutamine 40–glycine 157 folds into the RabBD domain. An FYVE-type zinc finger spans residues glycine 88–glutamate 145. Zn(2+) contacts are provided by cysteine 94, cysteine 97, cysteine 111, cysteine 114, cysteine 119, cysteine 122, cysteine 137, and cysteine 140. Positions valine 162–serine 377 are disordered. The segment covering alanine 199–alanine 208 has biased composition (basic and acidic residues). Arginine 223 carries the post-translational modification Omega-N-methylarginine. Positions arginine 243–histidine 252 are enriched in basic and acidic residues. At serine 274 the chain carries Phosphoserine. Positions alanine 283–proline 299 are enriched in pro residues. The span at glycine 301–arginine 310 shows a compositional bias: low complexity. Residues threonine 382 to isoleucine 504 enclose the C2 1 domain. Ca(2+)-binding residues include methionine 412, aspartate 413, aspartate 419, aspartate 474, glutamate 475, aspartate 476, glutamate 482, glutamate 529, aspartate 571, aspartate 577, aspartate 631, tyrosine 632, aspartate 633, and aspartate 639. A C2 2 domain is found at glutamate 540–histidine 673. Phosphoserine is present on residues serine 682 and serine 683.

In terms of assembly, interacts with RAB3B, RAB3C, RAB3D, RAB8A, RAB27A and RAB27B. Interacts with RAB3A; this interaction recruits RPH3A to synaptic vesicules. Interacts (via C2B domain) with SNAP25. Interacts with deubiquitinating enzyme CAND1; this interaction results in the deubiquitination of RPH3A. Interacts with GRIN2A and DLG4; this ternary complex regulates NMDA receptor composition at postsynaptic membranes. Interacts with SNCA. Ca(2+) is required as a cofactor. In terms of processing, ubiquitinated. Deubiquitinated by CAND1 to prevent its degradation. Specifically expressed in brain.

It is found in the cytoplasmic vesicle. Its subcellular location is the secretory vesicle. It localises to the synaptic vesicle membrane. The protein resides in the cell projection. The protein localises to the dendritic spine. It is found in the postsynaptic cell membrane. Its subcellular location is the membrane. Its function is as follows. Plays an essential role in docking and fusion steps of regulated exocytosis. At the presynaptic level, RPH3A is recruited by RAB3A to the synaptic vesicle membrane in a GTP-dependent manner where it modulates synaptic vesicle trafficking and calcium-triggered neurotransmitter release. In the post-synaptic compartment, forms a ternary complex with GRIN2A and DLG4 and regulates NMDA receptor stability. Also plays a role in the exocytosis of arginine vasopressin hormone. This Rattus norvegicus (Rat) protein is Rabphilin-3A (Rph3a).